The primary structure comprises 338 residues: Lipoate-protein ligase A (338 aa).

Residues 29–216 (PATQRVLFLW…AFFAHYGERV (188 aa)) enclose the BPL/LPL catalytic domain. ATP-binding positions include Arg71, 76-79 (GAVF), and Lys134. Lys134 serves as a coordination point for (R)-lipoate.

The protein belongs to the LplA family. Monomer.

The protein resides in the cytoplasm. The catalysed reaction is L-lysyl-[lipoyl-carrier protein] + (R)-lipoate + ATP = N(6)-[(R)-lipoyl]-L-lysyl-[lipoyl-carrier protein] + AMP + diphosphate + H(+). It participates in protein modification; protein lipoylation via exogenous pathway; protein N(6)-(lipoyl)lysine from lipoate: step 1/2. Its pathway is protein modification; protein lipoylation via exogenous pathway; protein N(6)-(lipoyl)lysine from lipoate: step 2/2. Functionally, catalyzes both the ATP-dependent activation of exogenously supplied lipoate to lipoyl-AMP and the transfer of the activated lipoyl onto the lipoyl domains of lipoate-dependent enzymes. The chain is Lipoate-protein ligase A from Shigella boydii serotype 18 (strain CDC 3083-94 / BS512).